A 950-amino-acid chain; its full sequence is Translation initiation factor IF-2 (950 aa).

4 stretches are compositionally biased toward basic and acidic residues: residues 128–156 (KPKV…KVEA), 165–186 (AEVK…EKKK), 200–234 (KRAE…DNRR), and 291–312 (NRRD…DGNR). The tract at residues 128–352 (KPKVAEPVKK…YQNNQSSNVP (225 aa)) is disordered. Composition is skewed to polar residues over residues 322–336 (NRNQ…NWNQ) and 343–352 (YQNNQSSNVP). The region spanning 448 to 619 (ERPAVVTIMG…LLVAEVQELK (172 aa)) is the tr-type G domain. Residues 457-464 (GHVDHGKT) form a G1 region. 457 to 464 (GHVDHGKT) is a binding site for GTP. Residues 482–486 (GITQH) form a G2 region. A G3 region spans residues 503–506 (DTPG). GTP contacts are provided by residues 503-507 (DTPGH) and 557-560 (NKLD). The interval 557-560 (NKLD) is G4. Residues 595–597 (SAK) are G5.

Belongs to the TRAFAC class translation factor GTPase superfamily. Classic translation factor GTPase family. IF-2 subfamily.

It localises to the cytoplasm. Functionally, one of the essential components for the initiation of protein synthesis. Protects formylmethionyl-tRNA from spontaneous hydrolysis and promotes its binding to the 30S ribosomal subunits. Also involved in the hydrolysis of GTP during the formation of the 70S ribosomal complex. The protein is Translation initiation factor IF-2 (infB) of Lactococcus lactis subsp. cremoris (Streptococcus cremoris).